We begin with the raw amino-acid sequence, 558 residues long: Methionine--tRNA ligase 1 (558 aa).

The short motif at 10–20 (PYINGIKHLGN) is the 'HIGH' region element. Zn(2+)-binding residues include C142, C145, C155, and C158. The 'KMSKS' region motif lies at 332–336 (KFSTS). T335 is a binding site for ATP.

The protein belongs to the class-I aminoacyl-tRNA synthetase family. MetG type 1 subfamily. In terms of assembly, monomer. It depends on Zn(2+) as a cofactor.

It localises to the cytoplasm. It catalyses the reaction tRNA(Met) + L-methionine + ATP = L-methionyl-tRNA(Met) + AMP + diphosphate. Its function is as follows. Is required not only for elongation of protein synthesis but also for the initiation of all mRNA translation through initiator tRNA(fMet) aminoacylation. This chain is Methionine--tRNA ligase 1, found in Acaryochloris marina (strain MBIC 11017).